A 124-amino-acid chain; its full sequence is Small ribosomal subunit protein eS6 (124 aa).

Belongs to the eukaryotic ribosomal protein eS6 family.

This Methanococcus maripaludis (strain DSM 14266 / JCM 13030 / NBRC 101832 / S2 / LL) protein is Small ribosomal subunit protein eS6.